Here is a 357-residue protein sequence, read N- to C-terminus: MLDKLEFTENKYEELSIKISDPSVMANQNEWRKLCKEHAELETIVTKYREYKTNKEELEANKEMLSEETDKDMKEMIQEEIKTLEESIVKDQEELKILLLPKDPNDDKNVFIEIRAGAGGDEAALFAANLFRMYTRYAERHGWKTELMSANETDIGGFKEVVFMLRGDCAYSKMKFESGVHRVQRVPDTESSGRIHTSTATVAVLPEVDDVDIQIDPNDIRVDVFRASGHGGQCVNTTDSAVRMTHIPTGIVVSCQDEKSQLKNKEKAMKVLKARLYEKAEAERSASISADRKSQVGTGDRSERIRTYNYPQGRVTEHRIGLTLYKLEAFLDGDMEEVIDALITAEQAEKMKAMGNN.

Residue Gln-233 is modified to N5-methylglutamine. The interval 284 to 305 (RSASISADRKSQVGTGDRSERI) is disordered.

The protein belongs to the prokaryotic/mitochondrial release factor family. In terms of processing, methylated by PrmC. Methylation increases the termination efficiency of RF1.

The protein localises to the cytoplasm. Its function is as follows. Peptide chain release factor 1 directs the termination of translation in response to the peptide chain termination codons UAG and UAA. This Clostridium novyi (strain NT) protein is Peptide chain release factor 1.